Here is a 124-residue protein sequence, read N- to C-terminus: MSLEQKSQHCKPEEGLDTQEEALGLVGVQAATTEEQEAVSSSSPLVPGTLGEVPAAGSPGPLKSPQGASAIPTAIDFTLWRQSIKGSSNQEEEGPSTSPDPESVFRAALSKKVADLIHFLLLKY.

Positions 1–14 are enriched in basic and acidic residues; that stretch reads MSLEQKSQHCKPEE. 2 disordered regions span residues 1–69 and 82–103; these read MSLE…QGAS and QSIKGSSNQEEEGPSTSPDPES. The MAGE domain maps to 3-124; that stretch reads LEQKSQHCKP…DLIHFLLLKY (122 aa). 2 stretches are compositionally biased toward polar residues: residues 30-44 and 82-100; these read AATTEEQEAVSSSSP and QSIKGSSNQEEEGPSTSPD.

Expressed in many tumors of several types, such as melanoma, head and neck squamous cell carcinoma, lung carcinoma and breast carcinoma, but not in normal tissues except for testes.

Its function is as follows. May negatively regulates apoptosis. The protein is Putative melanoma-associated antigen 5P of Homo sapiens (Human).